Consider the following 173-residue polypeptide: Superoxide dismutase [Cu-Zn] (173 aa).

The signal sequence occupies residues 1-22 (MNKAKTLLFTALAFGLSHQALA). H67, H69, and H92 together coordinate Cu cation. Residues C74 and C169 are joined by a disulfide bond. Zn(2+)-binding residues include H92, H101, H110, and D113. H147 provides a ligand contact to Cu cation.

This sequence belongs to the Cu-Zn superoxide dismutase family. Homodimer. The cofactor is Cu cation. It depends on Zn(2+) as a cofactor.

It localises to the periplasm. It catalyses the reaction 2 superoxide + 2 H(+) = H2O2 + O2. Functionally, destroys radicals which are normally produced within the cells and which are toxic to biological systems. The polypeptide is Superoxide dismutase [Cu-Zn] (sodC) (Photobacterium leiognathi).